We begin with the raw amino-acid sequence, 403 residues long: LIM/homeobox protein Lhx1 (403 aa).

LIM zinc-binding domains follow at residues C4–D54 and C63–D117. Positions I131–P147 are enriched in polar residues. Disordered stretches follow at residues I131–T185 and P318–S366. Basic and acidic residues predominate over residues D150–G166. The homeobox DNA-binding region spans R179–K238.

In terms of assembly, interacts with ldb1 via the tandem LIM domains. Both LIM domains are required for optimal binding and binding relieves the inhibitory effect of the LIM domains and activates lhx1. Binding to ldb1 also prevents degradation of ldb1 by rnf12. The stoichiometry of lhx1 and ldb1 is important for their function and an excess of ldb1 can inhibit lhx1 function. Interacts with the N-terminal region of rnf12 by a homeobox-dependent mechanism. Exhibits a biphasic expression pattern. Initially localized to the Spemann organizer region of gastrulae, leading to expression in prechordal mesoderm and notochord. In the second phase, expressed in the lateral mesoderm and neural plate, eventually concentrating in the pronephros and the CNS. Expressed in the pronephros primordium by late gastrula (stage 12.5) and becomes restricted to the tips of the tubules and ducts as kidney development progresses. In the CNS, becomes progressively recognizable in anatomically distinct structures during larval development. Within the forebrain, shows almost identical expression to lhx5 in the diencephalon, being expressed in alternating stripes to lhx2 and lhx9. Expressed in the diencephalic pretectum within prosomere 1, hypothalamus, ventral thalamus and zona limitans intrathalamica. In the telencephalon, the expression pattern is distinct from lhx5, being localized in the pallium and subpallium. Also expressed in the ventral territories of midbrain (mesencephalon) and hindbrain (rhombencephalon), being expressed in the mesencephalic tegmentum and hindbrain reticular formation. Also shows intense expression in the cerebellum including Purkinje cells.

The protein resides in the nucleus. Involved in the establishment of the body plan via the Spemann organizer during gastrulation. Transcriptional activator required to induce organizer gene expression downstream of siamois. Promotes head formation by binding to 5'-TAAT'-3' elements in the promoters of head organizer genes cer1 and gsc to stimulate expression. Binds as a complex with siamois and mix-A/mix.1 to the cer1 promoter, and with ldb1 and otx2 to the gsc promoter. Also involved in neural induction via the organizer, including a role in notochord formation. Acts synergistically with ldb1 and ssbp in subsequent axis formation. Involved in kidney development, acting synergistically with pax8 to establish the pronephric primordium in late gastrulae/early neurulae and with pax2 during pronephric morphogenesis in tailbud stages. Has a later role in mediating the activity of inhibitors of ventralization. In Xenopus laevis (African clawed frog), this protein is LIM/homeobox protein Lhx1 (lhx1).